A 477-amino-acid chain; its full sequence is ATP-dependent rRNA helicase RRP3 (477 aa).

The segment at 1-22 is disordered; it reads MSVKVDGMINKKSKTHSKKLDA. Positions 65–93 match the Q motif motif; that stretch reads KSFNELKLIPELLEAIQQMKFTKPTPIQS. Positions 96 to 267 constitute a Helicase ATP-binding domain; that stretch reads IPHALEGKDI…RASLHNPVRV (172 aa). 109-116 serves as a coordination point for ATP; sequence AQTGSGKT. The short motif at 215–218 is the DEAD box element; it reads DEAD. The Helicase C-terminal domain maps to 294 to 438; it reads YLIHLLNEFL…KDPSPSKAVL (145 aa). The segment at 452 to 477 is disordered; the sequence is AIRQTKDFHEKRNPKKNRDDRDREER.

Belongs to the DEAD box helicase family. DDX47/RRP3 subfamily. As to quaternary structure, interacts with the SSU processome.

Its subcellular location is the nucleus. It carries out the reaction ATP + H2O = ADP + phosphate + H(+). ATP-dependent rRNA helicase required for pre-ribosomal RNA processing. Involved in the maturation of the 35S-pre-rRNA and to its cleavage to mature 18S rRNA. This is ATP-dependent rRNA helicase RRP3 from Debaryomyces hansenii (strain ATCC 36239 / CBS 767 / BCRC 21394 / JCM 1990 / NBRC 0083 / IGC 2968) (Yeast).